Consider the following 1496-residue polypeptide: MALSKGLRLLARLDPTGPSSVLLEARGRGDCLLFEAGAVATLAPEEKEVIKGLYGKPTDAYGCLGELSLKSGGVPLSFLVLVTGCTSVGRIPDAEIYKITGTEFYPLQEEAKEEDRLPALKKILSSGVFYFAWPNDGACFDLTIRAQKQGDDCSEWGTSFFWNQLLHVPLRQHQVNCHDWLLKVICGVVTIRTVYASHKQAKACLISRISCERAGARFLTRGVNDDGHVSNFVETEQAIYMDDGVSSFVQIRGSVPLFWEQPGLQVGSHHLRLHRGLEANAPAFERHMVLLKEQYGQQVVVNLLGSRGGEEVLNRAFKKLLWASCHAGDTPMINFDFHQFAKGRKLEKLENLLRPQLKLHWDDFGVFAKGENVSPRFQKGTLRMNCLDCLDRTNTVQCFIALEVLHLQLESLGLNSKPITDRFVESFKAMWSLNGHGLSKVFTGSRALEGKAKVGKLKDGARSMSRTIQSNFFDGVKQEAIKLLLVGDVYNEESTDKGRMLLDNTALLGLGSNKQNSLSGMLDGKATPRILKAMTERQSEFTNFKRIQIAMGTWNVNGGKQFRSNLLGTTELTDWLLDAPQLSGAVDSQDDGGPADIFAVGFEEMVELSAGNIVNASTTNRKMWGEQLQKAISRSHRYILLTSAQLVGVCLYIFVRPYHVPFIRDVAIDTVKTGMGGKAGNKGAVGIRFQFHSTSFCFICSHLTAGQSQVKERNEDYREITHKLSFPSGRNIFSHDYVFWCGDFNYRIDLTYEEVFYFVKRQDWKKLMEFDQLQLQKSSGKIFKDFHEGTINFGPTYKYDVGSAAYDTSDKCRTPAWTDRVLWWRKKHPYDKTAGELNLLDSDLDGDANIRHTWSPGTLKYYGRAELQASDHRPVLAIVEVEVQEVDVGARERVFQEVSSVQGPLDATVIVNLQSPTLEERNEFPEDLRTELMQTLGNYGTIILVRINQGQMLVTFADSHSALSVLDVDGMKVKGRAVKIRPKTKDWLEGLREELIRKRDSMAPVSPTANSCLLEENFDFTSLDYESEGDVLEDDEDYLADEFGQPVVSDSELGGDDSSDTMSASTPASKSPALAKKKQHPTYKDDADLMTLKLELEVAGNFRHRSPSRSLSVPNRPRPPHPPQRPPPPTGLMVKKSASDASISSGTHGQYSILQTAKLLPGAPQQPPKARTGISKPYNVKQIKTTNAQEAEAAIRCLLEAGGGVPESAPGATPLRNQGSSKPEASLGPPVLPRRPVPRVPTMKKPTLRRTGKPMLPEEQCEQQPVHFTMASQEMNLETPPPITAPIPPVPKPRTFQPGRGVERRPSGGKPEPDDAPPVTGAVELSSPEAPEAPSLAPKVPPRRKKSAPAAFHLQVLQSNSQLLQGLTCSSSSPSPPKPDTPLLYPQMALGTSSAISPETDGPRVTEPEAASFHGDYPDPFWSLLHHPKLLNNNTWLSKSSEPLDLGSRTPERTHTDSAQVNASVVERGLPPDHGGKDFSHWMAASNKDKRTTLGV.

The SAC domain occupies 120–444 (LKKILSSGVF…GHGLSKVFTG (325 aa)). The region spanning 906-985 (DATVIVNLQS…RAVKIRPKTK (80 aa)) is the RRM domain. Disordered regions lie at residues 1047-1083 (VVSD…HPTY), 1100-1149 (GNFR…GTHG), 1205-1357 (VPES…LQVL), 1393-1413 (SSAI…AASF), 1442-1461 (EPLD…SAQV), and 1468-1496 (RGLP…TLGV). Over residues 1063 to 1074 (SASTPASKSPAL) the composition is skewed to low complexity. The span at 1116–1130 (RPRPPHPPQRPPPPT) shows a compositional bias: pro residues. Serine 1139 bears the Phosphoserine mark. Residues 1139–1149 (SDASISSGTHG) show a composition bias toward polar residues. Composition is skewed to pro residues over residues 1230–1239 (PVLPRRPVPR) and 1279–1292 (TPPP…PVPK). Residues 1324–1338 (ELSSPEAPEAPSLAP) are compositionally biased toward low complexity. Basic and acidic residues-rich tracts occupy residues 1470-1480 (LPPDHGGKDFS) and 1487-1496 (NKDKRTTLGV).

It belongs to the synaptojanin family. In the central section; belongs to the inositol 1,4,5-trisphosphate 5-phosphatase family. In terms of assembly, binds to GRB2. Isoform 2A binds to SYNJ2BP/OMP25. Widely expressed. Isoforms 2B1 and 2B2 are concentrated at nerve terminals in brain and at spermatid manchette in testis.

It localises to the cytoplasm. The protein resides in the cell membrane. Its subcellular location is the presynapse. It is found in the cytoskeleton. The protein localises to the membrane raft. It localises to the mitochondrion. The enzyme catalyses a 1,2-diacyl-sn-glycero-3-phospho-(1D-myo-inositol-4,5-bisphosphate) + H2O = a 1,2-diacyl-sn-glycero-3-phospho-(1D-myo-inositol 4-phosphate) + phosphate. In terms of biological role, inositol 5-phosphatase which may be involved in distinct membrane trafficking and signal transduction pathways. May mediate the inhibitory effect of Rac1 on endocytosis. The polypeptide is Synaptojanin-2 (Synj2) (Rattus norvegicus (Rat)).